The following is a 422-amino-acid chain: Adenosylhomocysteinase (422 aa).

Substrate-binding residues include aspartate 129 and glutamate 154. Residue 155–157 (TTT) coordinates NAD(+). Lysine 184 and aspartate 188 together coordinate substrate. NAD(+)-binding positions include asparagine 189, 218–223 (GYGWCG), glutamate 241, asparagine 276, 297–299 (AGH), and asparagine 344.

This sequence belongs to the adenosylhomocysteinase family. NAD(+) is required as a cofactor.

Its subcellular location is the cytoplasm. It catalyses the reaction S-adenosyl-L-homocysteine + H2O = L-homocysteine + adenosine. It functions in the pathway amino-acid biosynthesis; L-homocysteine biosynthesis; L-homocysteine from S-adenosyl-L-homocysteine: step 1/1. In terms of biological role, may play a key role in the regulation of the intracellular concentration of adenosylhomocysteine. The sequence is that of Adenosylhomocysteinase from Pyrococcus abyssi (strain GE5 / Orsay).